Reading from the N-terminus, the 443-residue chain is UDP-N-acetylmuramate--L-alanine ligase (443 aa).

110-116 serves as a coordination point for ATP; it reads GAHGKTS.

This sequence belongs to the MurCDEF family.

Its subcellular location is the cytoplasm. It catalyses the reaction UDP-N-acetyl-alpha-D-muramate + L-alanine + ATP = UDP-N-acetyl-alpha-D-muramoyl-L-alanine + ADP + phosphate + H(+). Its pathway is cell wall biogenesis; peptidoglycan biosynthesis. Its function is as follows. Cell wall formation. The polypeptide is UDP-N-acetylmuramate--L-alanine ligase (Streptococcus gordonii (strain Challis / ATCC 35105 / BCRC 15272 / CH1 / DL1 / V288)).